Here is a 154-residue protein sequence, read N- to C-terminus: Ribosome maturation factor RimP (154 aa).

Belongs to the RimP family.

The protein resides in the cytoplasm. Functionally, required for maturation of 30S ribosomal subunits. This chain is Ribosome maturation factor RimP, found in Clostridium perfringens (strain ATCC 13124 / DSM 756 / JCM 1290 / NCIMB 6125 / NCTC 8237 / Type A).